A 123-amino-acid chain; its full sequence is Fluoride-specific ion channel FluC 2 (123 aa).

The next 3 helical transmembrane spans lie at 30–50, 68–88, and 93–113; these read FPLPTLMINVLGALLLGFVAG, VGFIGSFTTFSTWSVDTVLLL, and WPLALANVGISLAVGLAAVWV. Na(+)-binding residues include G72 and T75.

This sequence belongs to the fluoride channel Fluc/FEX (TC 1.A.43) family.

Its subcellular location is the cell membrane. It catalyses the reaction fluoride(in) = fluoride(out). Na(+) is not transported, but it plays an essential structural role and its presence is essential for fluoride channel function. Its function is as follows. Fluoride-specific ion channel. Important for reducing fluoride concentration in the cell, thus reducing its toxicity. The protein is Fluoride-specific ion channel FluC 2 of Symbiobacterium thermophilum (strain DSM 24528 / JCM 14929 / IAM 14863 / T).